The sequence spans 24 residues: 12 kDa protein (24 aa).

In Mycolicibacterium smegmatis (Mycobacterium smegmatis), this protein is 12 kDa protein.